The primary structure comprises 582 residues: ATP-dependent lipid A-core flippase (582 aa).

Helical transmembrane passes span leucine 16–leucine 36, leucine 64–isoleucine 84, isoleucine 153–valine 173, proline 253–proline 273, and valine 275–methionine 295. The ABC transmembrane type-1 domain occupies isoleucine 28–arginine 310. An ABC transporter domain is found at leucine 342 to methionine 578. An ATP-binding site is contributed by glycine 376 to serine 383.

The protein belongs to the ABC transporter superfamily. Lipid exporter (TC 3.A.1.106) family. In terms of assembly, homodimer.

The protein resides in the cell inner membrane. It catalyses the reaction ATP + H2O + lipid A-core oligosaccharideSide 1 = ADP + phosphate + lipid A-core oligosaccharideSide 2.. Functionally, involved in lipopolysaccharide (LPS) biosynthesis. Translocates lipid A-core from the inner to the outer leaflet of the inner membrane. Transmembrane domains (TMD) form a pore in the inner membrane and the ATP-binding domain (NBD) is responsible for energy generation. The chain is ATP-dependent lipid A-core flippase from Salmonella choleraesuis (strain SC-B67).